The primary structure comprises 860 residues: Leucine--tRNA ligase (860 aa).

The short motif at 42-52 (PYPSGRLHMGH) is the 'HIGH' region element. The 'KMSKS' region motif lies at 619-623 (KMSKS). Lysine 622 is an ATP binding site.

It belongs to the class-I aminoacyl-tRNA synthetase family.

The protein localises to the cytoplasm. It catalyses the reaction tRNA(Leu) + L-leucine + ATP = L-leucyl-tRNA(Leu) + AMP + diphosphate. In Sodalis glossinidius (strain morsitans), this protein is Leucine--tRNA ligase.